Consider the following 288-residue polypeptide: Phosphatidylglycerol--prolipoprotein diacylglyceryl transferase (288 aa).

4 helical membrane-spanning segments follow: residues 18-38, 68-88, 107-127, and 135-155; these read WSLR…LACL, FFIY…VIFY, GLSS…FSWI, and LTFL…AFFI. Arg-156 is a binding site for a 1,2-diacyl-sn-glycero-3-phospho-(1'-sn-glycerol). The next 3 helical transmembrane spans lie at 193–213, 222–242, and 256–276; these read VQLY…FLSY, GYVT…AEYV, and LTIG…LLII.

Belongs to the Lgt family.

It localises to the cell inner membrane. It carries out the reaction L-cysteinyl-[prolipoprotein] + a 1,2-diacyl-sn-glycero-3-phospho-(1'-sn-glycerol) = an S-1,2-diacyl-sn-glyceryl-L-cysteinyl-[prolipoprotein] + sn-glycerol 1-phosphate + H(+). The protein operates within protein modification; lipoprotein biosynthesis (diacylglyceryl transfer). Its function is as follows. Catalyzes the transfer of the diacylglyceryl group from phosphatidylglycerol to the sulfhydryl group of the N-terminal cysteine of a prolipoprotein, the first step in the formation of mature lipoproteins. This is Phosphatidylglycerol--prolipoprotein diacylglyceryl transferase from Chlamydia pneumoniae (Chlamydophila pneumoniae).